The sequence spans 530 residues: PC4 and SFRS1-interacting protein (530 aa).

One can recognise a PWWP domain in the interval 1–64 (MTRDFKPGDL…PKDIFPYSEN (64 aa)). Lys75 participates in a covalent cross-link: Glycyl lysine isopeptide (Lys-Gly) (interchain with G-Cter in SUMO2). The interval 86–349 (NNPKVKFSSQ…VEKKRETSMD (264 aa)) is disordered. Polar residues predominate over residues 92 to 104 (FSSQQASTKQSNA). A phosphoserine mark is found at Ser102, Ser105, and Ser106. Basic and acidic residues predominate over residues 113 to 135 (KETSVSKEDTDHEEKASNEDVTK). 2 positions are modified to phosphothreonine: Thr115 and Thr122. Ser129 bears the Phosphoserine mark. Thr141 is subject to Phosphothreonine. Residues 144-153 (AARRGRKRKA) are compositionally biased toward basic residues. The short motif at 146-156 (RRGRKRKAEKQ) is the Nuclear localization signal element. Thr167 carries the post-translational modification Phosphothreonine. Ser177 and Ser206 each carry phosphoserine. Positions 213–261 (EEDKSKKKGQEEKQPKKQLKKDEEGQKEEDKPRKEPDKKEGKKEVESKR) are enriched in basic and acidic residues. Ser271 carries the post-translational modification Phosphoserine. Thr272 carries the phosphothreonine modification. Residues Ser273 and Ser275 each carry the phosphoserine modification. Acidic residues predominate over residues 274-283 (DSEEEGDDQE). Residues 287–302 (KRKGGRNFQTAHRRNM) are compositionally biased toward basic residues. A compositionally biased stretch (basic and acidic residues) spans 305-349 (GQHEKEAADRKRKQEEQMETEQQNKDEGKKPEVKKVEKKRETSMD). Coiled-coil stretches lie at residues 306–334 (QHEKEAADRKRKQEEQMETEQQNKDEGKK) and 371–395 (NRCIEALDELASLQVTMQQAQKHTE). Residues 340–417 (VEKKRETSMD…VSQIIMEKST (78 aa)) form an integrase-binding domain (IBD) region. Ser434 is subject to Phosphoserine. Thr437 is subject to Phosphothreonine. Position 443 is a phosphoserine (Ser443). Over residues 446-473 (EQRQHEEANKTKDQGKKGPNKKLDKEQT) the composition is skewed to basic and acidic residues. The tract at residues 446-530 (EQRQHEEANK…ISLKDSTLDN (85 aa)) is disordered. Polar residues predominate over residues 474–494 (GSKTLNGGSDAPDSNQAQHNG). The span at 498–530 (EESKDKHEASSKKKPSNEERETEISLKDSTLDN) shows a compositional bias: basic and acidic residues. Arg517 is subject to Citrulline. Phosphoserine is present on Ser522. At Thr527 the chain carries Phosphothreonine.

The protein belongs to the HDGF family. In terms of assembly, monomer. Interacts with IFRD1/PC4. Interacts (via IBD domain) with POGZ (via IBM motif) and CDCA7L (via IBM motifs). Interacts (via IBD domain) with KMT2A (via IBM motifs) with a moderate affinity whereas interacts with the KMT2A-MEN1 complex with a greater affinity; MEN1 enhances interaction of KMT2A with PSIP1. Interacts (via IBD domain) with IWS1 (via IBM motif), MED1 (via IBM motif) and DBF4 (via IBM motifs). As to quaternary structure, (Microbial infection) Interacts (via IBD domain) with feline immunodeficiency virus (FIV) integrase (IN), determining its nuclear localization, its tight association with chromatin and its protection from the proteasome. Post-translationally, citrullinated by PADI4.

The protein resides in the nucleus. Transcriptional coactivator involved in neuroepithelial stem cell differentiation and neurogenesis. Involved in particular in lens epithelial cell gene regulation and stress responses. May play an important role in lens epithelial to fiber cell terminal differentiation. May play a protective role during stress-induced apoptosis. This chain is PC4 and SFRS1-interacting protein (PSIP1), found in Felis catus (Cat).